A 403-amino-acid polypeptide reads, in one-letter code: DNA primase DnaG (403 aa).

The Toprim domain occupies 172–248 (DSVIIVEGRA…HIDYIARAPP (77 aa)). Mg(2+)-binding residues include Glu178, Asp222, and Asp224. The disordered stretch occupies residues 279–300 (AAGEKTEAPAQPTQQQPPPAEA).

Belongs to the archaeal DnaG primase family. As to quaternary structure, forms a ternary complex with MCM helicase and DNA. Component of the archaeal exosome complex. Requires Mg(2+) as cofactor.

It carries out the reaction ssDNA + n NTP = ssDNA/pppN(pN)n-1 hybrid + (n-1) diphosphate.. RNA polymerase that catalyzes the synthesis of short RNA molecules used as primers for DNA polymerase during DNA replication. Also part of the exosome, which is a complex involved in RNA degradation. Acts as a poly(A)-binding protein that enhances the interaction between heteromeric, adenine-rich transcripts and the exosome. This Pyrobaculum neutrophilum (strain DSM 2338 / JCM 9278 / NBRC 100436 / V24Sta) (Thermoproteus neutrophilus) protein is DNA primase DnaG.